A 202-amino-acid chain; its full sequence is Small ribosomal subunit protein uS4c (202 aa).

An S4 RNA-binding domain is found at 90 to 153; sequence MRLDNIIFRL…KSEAIISKNI (64 aa).

It belongs to the universal ribosomal protein uS4 family. Part of the 30S ribosomal subunit. Contacts protein S5. The interaction surface between S4 and S5 is involved in control of translational fidelity.

The protein localises to the plastid. The protein resides in the chloroplast. Functionally, one of the primary rRNA binding proteins, it binds directly to 16S rRNA where it nucleates assembly of the body of the 30S subunit. In terms of biological role, with S5 and S12 plays an important role in translational accuracy. The polypeptide is Small ribosomal subunit protein uS4c (rps4) (Leucodon sciuroides (Moss)).